Consider the following 241-residue polypeptide: Probable transcriptional regulatory protein str0195 (241 aa).

Belongs to the TACO1 family. YeeN subfamily.

The protein localises to the cytoplasm. This Streptococcus thermophilus (strain CNRZ 1066) protein is Probable transcriptional regulatory protein str0195.